We begin with the raw amino-acid sequence, 238 residues long: Uridylate kinase (238 aa).

Residue 12–15 (KLSG) participates in ATP binding. A UMP-binding site is contributed by Gly-54. Residues Gly-55 and Arg-59 each coordinate ATP. UMP-binding positions include Asp-74 and 135-142 (TGNPYFTT). 4 residues coordinate ATP: Thr-162, Asn-163, Tyr-168, and Asp-171.

This sequence belongs to the UMP kinase family. As to quaternary structure, homohexamer.

Its subcellular location is the cytoplasm. The catalysed reaction is UMP + ATP = UDP + ADP. The protein operates within pyrimidine metabolism; CTP biosynthesis via de novo pathway; UDP from UMP (UMPK route): step 1/1. Inhibited by UTP. Functionally, catalyzes the reversible phosphorylation of UMP to UDP. The chain is Uridylate kinase from Bradyrhizobium sp. (strain ORS 278).